We begin with the raw amino-acid sequence, 417 residues long: NADH-quinone oxidoreductase subunit D (417 aa).

Belongs to the complex I 49 kDa subunit family. NDH-1 is composed of 14 different subunits. Subunits NuoB, C, D, E, F, and G constitute the peripheral sector of the complex.

It localises to the cell inner membrane. It carries out the reaction a quinone + NADH + 5 H(+)(in) = a quinol + NAD(+) + 4 H(+)(out). Functionally, NDH-1 shuttles electrons from NADH, via FMN and iron-sulfur (Fe-S) centers, to quinones in the respiratory chain. The immediate electron acceptor for the enzyme in this species is believed to be ubiquinone. Couples the redox reaction to proton translocation (for every two electrons transferred, four hydrogen ions are translocated across the cytoplasmic membrane), and thus conserves the redox energy in a proton gradient. In Francisella philomiragia subsp. philomiragia (strain ATCC 25017 / CCUG 19701 / FSC 153 / O#319-036), this protein is NADH-quinone oxidoreductase subunit D.